The sequence spans 24 residues: Fibrinogen gamma chain (24 aa).

As to quaternary structure, heterohexamer; disulfide linked. Contains 2 sets of 3 non-identical chains (alpha, beta and gamma). The 2 heterotrimers are in head to head conformation with the N-termini in a small central domain. Conversion of fibrinogen to fibrin is triggered by thrombin, which cleaves fibrinopeptides A and B from alpha and beta chains, and thus exposes the N-terminal polymerization sites responsible for the formation of the soft clot. The soft clot is converted into the hard clot by factor XIIIA which catalyzes the epsilon-(gamma-glutamyl)lysine cross-linking between gamma chains (stronger) and between alpha chains (weaker) of different monomers.

The protein resides in the secreted. Together with fibrinogen alpha (FGA) and fibrinogen beta (FGB), polymerizes to form an insoluble fibrin matrix. Has a major function in hemostasis as one of the primary components of blood clots. In addition, functions during the early stages of wound repair to stabilize the lesion and guide cell migration during re-epithelialization. Was originally thought to be essential for platelet aggregation, based on in vitro studies using anticoagulated blood. However, subsequent studies have shown that it is not absolutely required for thrombus formation in vivo. Enhances expression of SELP in activated platelets via an ITGB3-dependent pathway. Maternal fibrinogen is essential for successful pregnancy. Fibrin deposition is also associated with infection, where it protects against IFNG-mediated hemorrhage. May also facilitate the antibacterial immune response via both innate and T-cell mediated pathways. This chain is Fibrinogen gamma chain (FGG), found in Canis lupus familiaris (Dog).